We begin with the raw amino-acid sequence, 242 residues long: Caspase-14 (242 aa).

A propeptide spanning residues 1–5 (MSNPR) is cleaved from the precursor. Active-site residues include His89 and Cys132. A propeptide spanning residues 147-152 (EIVMVI) is cleaved from the precursor.

The protein belongs to the peptidase C14A family. In terms of assembly, heterodimer of a large and a small subunit, both processed from the precursor; the mature active form is a p17/p10 dimer and the intermediate form a p20/p8 dimer. Post-translationally, maturation by proteolytic processing appears to be a two-step process. The precursor is processed by KLK7 to yield the p20/p8 intermediate form which acts on the precursor to yield the p17/p10 mature form. Initially, cleavage between Ile-152 and Lys-153 has been proposed to yield the large and small subunits of the active enzyme. In terms of tissue distribution, expressed in keratinocytes of adult skin suprabasal layers (from spinous layers to the stratum granulosum and stratum corneum) (at protein level). Expressed in keratinocytes of hair shaft and sebaceous glands (at protein level). In psoriatic skin only expressed at very low levels. The p17/10 mature form is expressed in epidermis stratum corneum, the p20/p8 intermediate form in epidermis upper granular cells of the stratum granulosum.

The protein localises to the cytoplasm. The protein resides in the nucleus. With respect to regulation, inhibited by caspase-1 inhibitor YVAD-FMK and the pan-caspase inhibitor VAD-FMK. Non-apoptotic caspase involved in epidermal differentiation. Is the predominant caspase in epidermal stratum corneum. Seems to play a role in keratinocyte differentiation and is required for cornification. Regulates maturation of the epidermis by proteolytically processing filaggrin. In vitro has a preference for the substrate [WY]-X-X-D motif and is active on the synthetic caspase substrate WEHD-ACF. Involved in processing of prosaposin in the epidermis. May be involved in retinal pigment epithelium cell barrier function. Involved in DNA degradation in differentiated keratinocytes probably by cleaving DFFA/ICAD leading to liberation of DFFB/CAD. This chain is Caspase-14 (CASP14), found in Homo sapiens (Human).